We begin with the raw amino-acid sequence, 353 residues long: MVNGWLNLDKPTGMSSAQAVTQIKRIFGIKKAGHLGTLDPLASGILPIALGEATKTIPYLSCDLKAYNFTIKWGKQTTTDDLGGDIIRTSDIKPEYNQINCAIKDFIGEITQTPPQFSAVKIKGARAYKLARSGQKVNIKPRQVKIHELKMIFLDTINNIADFSMICGSGVYVRSIARDLGIELNCFGHITQLRRTMVGDFKEDESVTIEQLTKKNTTTYSPQCLTLDTNTYKSCNGQKILGAYVKNNVRDEIGLIPVLDTGMTSEGGMTEDDGGNTKGFIIPIESALKSMFKVEISLEEAEKIRKGQEIILNNLRNLKNYDIFCTIVGNVPIAICSFTHGYVKPIRVFNILK.

The active-site Nucleophile is Asp-39.

The protein belongs to the pseudouridine synthase TruB family. Type 1 subfamily.

It carries out the reaction uridine(55) in tRNA = pseudouridine(55) in tRNA. Its function is as follows. Responsible for synthesis of pseudouridine from uracil-55 in the psi GC loop of transfer RNAs. The protein is tRNA pseudouridine synthase B of Wolbachia pipientis subsp. Culex pipiens (strain wPip).